A 593-amino-acid polypeptide reads, in one-letter code: Prospero homeobox protein 2 (593 aa).

Disordered stretches follow at residues 24 to 48 (CMDQ…QLPS), 79 to 130 (SPSS…GGTR), 153 to 199 (TEPR…KDLC), 260 to 284 (QERS…SAYK), 298 to 333 (PQAG…QSPL), and 356 to 388 (GRGP…PWGL). The span at 87–99 (RARESLRCPEKGR) shows a compositional bias: basic and acidic residues. Residues 167–181 (PRSSPRARPRNSCSS) are compositionally biased toward low complexity. Residues 363 to 380 (WSGSPPQDAAFQSHTSPE) are compositionally biased toward polar residues. The Prospero-type homeo domain occupies 433–491 (QEGLSPGHLKKAKLMFFFTRYPSSSLLKAYFPDVQFNRCITSQMIKWFSNFREFYYIQM). A homeo-Prospero region spans residues 433 to 591 (QEGLSPGHLK…KSPSFLPGLF (159 aa)). In terms of domain architecture, Prospero spans 492–591 (EKYARQALSD…KSPSFLPGLF (100 aa)).

Belongs to the Prospero homeodomain family. As to expression, expressed in testis.

It localises to the nucleus. Functionally, transcription regulator. Does not seem to be essential for embryonic development and postnatal survival. The chain is Prospero homeobox protein 2 (Prox2) from Mus musculus (Mouse).